An 878-amino-acid polypeptide reads, in one-letter code: Leucine--tRNA ligase (878 aa).

Residues 43 to 54 carry the 'HIGH' region motif; sequence PYPSAQGLHVGH. Residues 634-638 carry the 'KMSKS' region motif; it reads KMSKA. Lys-637 provides a ligand contact to ATP.

The protein belongs to the class-I aminoacyl-tRNA synthetase family.

The protein resides in the cytoplasm. It carries out the reaction tRNA(Leu) + L-leucine + ATP = L-leucyl-tRNA(Leu) + AMP + diphosphate. The sequence is that of Leucine--tRNA ligase from Treponema pallidum subsp. pallidum (strain SS14).